Reading from the N-terminus, the 595-residue chain is Elongation factor 4 (595 aa).

One can recognise a tr-type G domain in the interval 1 to 183 (MNVRNFSIIA…AIVERIPPPP (183 aa)). GTP is bound by residues 13–18 (DHGKST) and 130–133 (NKID).

It belongs to the TRAFAC class translation factor GTPase superfamily. Classic translation factor GTPase family. LepA subfamily.

It is found in the cell membrane. It catalyses the reaction GTP + H2O = GDP + phosphate + H(+). Required for accurate and efficient protein synthesis under certain stress conditions. May act as a fidelity factor of the translation reaction, by catalyzing a one-codon backward translocation of tRNAs on improperly translocated ribosomes. Back-translocation proceeds from a post-translocation (POST) complex to a pre-translocation (PRE) complex, thus giving elongation factor G a second chance to translocate the tRNAs correctly. Binds to ribosomes in a GTP-dependent manner. This is Elongation factor 4 from Deinococcus geothermalis (strain DSM 11300 / CIP 105573 / AG-3a).